The chain runs to 181 residues: Translationally-controlled tumor protein homolog (181 aa).

Residues 1–181 (MLIFKDAFTD…VKEALVEEKQ (181 aa)) enclose the TCTP domain.

The protein belongs to the TCTP family.

It is found in the cytoplasm. Involved in calcium binding and microtubule stabilization. The chain is Translationally-controlled tumor protein homolog from Wuchereria bancrofti.